Here is a 121-residue protein sequence, read N- to C-terminus: MSLTNEQIVDAIAEKSLMEVMELVKAIEEKFGVSAAAPVAAAAAGPAAVVEEQTEFNVVLTNCGANKVGVIKAVRAVTGLGLKEAKDLTEAGGMLKEGASKDEAEKIKKELTEAGATVEIK.

It belongs to the bacterial ribosomal protein bL12 family. In terms of assembly, homodimer. Part of the ribosomal stalk of the 50S ribosomal subunit. Forms a multimeric L10(L12)X complex, where L10 forms an elongated spine to which 2 to 4 L12 dimers bind in a sequential fashion. Binds GTP-bound translation factors.

Its function is as follows. Forms part of the ribosomal stalk which helps the ribosome interact with GTP-bound translation factors. Is thus essential for accurate translation. The sequence is that of Large ribosomal subunit protein bL12 from Xanthomonas euvesicatoria pv. vesicatoria (strain 85-10) (Xanthomonas campestris pv. vesicatoria).